Consider the following 394-residue polypeptide: Elongation factor Tu, mitochondrial (394 aa).

In terms of domain architecture, tr-type G spans 10–204; that stretch reads KPHCNIGTIG…AVDNYIPQPE (195 aa). The G1 stretch occupies residues 19–26; that stretch reads GHVDHGKT. 19 to 26 provides a ligand contact to GTP; the sequence is GHVDHGKT. A G2 region spans residues 60-64; the sequence is GITIS. The segment at 81-84 is G3; it reads DCPG. GTP-binding positions include 81–85 and 136–139; these read DCPGH and NKVD. The tract at residues 136-139 is G4; sequence NKVD. A G5 region spans residues 174-176; sequence SAL.

Belongs to the TRAFAC class translation factor GTPase superfamily. Classic translation factor GTPase family. EF-Tu/EF-1A subfamily.

It localises to the mitochondrion. This protein promotes the GTP-dependent binding of aminoacyl-tRNA to the A-site of ribosomes during protein biosynthesis. This Reclinomonas americana protein is Elongation factor Tu, mitochondrial (TUFA).